The following is a 326-amino-acid chain: DnaJ homolog subfamily B member 6 (326 aa).

The 68-residue stretch at 2 to 69 folds into the J domain; the sequence is VDYYEVLGVQ…KKRDIYDKYG (68 aa). The interval 2-146 is interaction with HSP70; the sequence is VDYYEVLGVQ…TGSFFSAFSG (145 aa). Residues 119 to 242 are interaction with KRT18; that stretch reads FEDFFGNRRG…ADDDALAEER (124 aa). Omega-N-methylarginine is present on Arg-135. The tract at residues 249–326 is disordered; that stretch reads ALPAQPAGLR…KKKKSTKGNH (78 aa). The residue at position 277 (Ser-277) is a Phosphoserine.

Homooligomer. Interacts with BAG3, HSPB8 and STUB1. Interacts with ALKBH1. Interacts with HSP70, KRT18 and PTTG. In terms of assembly, interacts with histone deacetylases HDAC4, HDAC6, and SIRT2, HDAC activity is required for antiaggregation. As to expression, widely expressed. Highest levels in testis and brain, and lower levels in heart, spleen, intestine, ovary, placenta, lung, kidney, pancreas, thymus, prostate, skeletal muscle, liver and leukocytes. In testis, expressed in germ cells in the earlier stages of differentiation pathway as well as in spermatids. In brain, expressed at a higher level in hippocampus and thalamus and a lower level in amygdala, substantia nigra, corpus callosum and caudate nucleus.

Its subcellular location is the cytoplasm. The protein localises to the perinuclear region. It localises to the nucleus. The protein resides in the myofibril. It is found in the sarcomere. Its subcellular location is the z line. Has a stimulatory effect on the ATPase activity of HSP70 in a dose-dependent and time-dependent manner and hence acts as a co-chaperone of HSP70. Plays an indispensable role in the organization of KRT8/KRT18 filaments. Acts as an endogenous molecular chaperone for neuronal proteins including huntingtin. Suppresses aggregation and toxicity of polyglutamine-containing, aggregation-prone proteins. Also reduces cellular toxicity and caspase-3 activity. In terms of biological role, isoform B but not isoform A inhibits huntingtin aggregation. This Homo sapiens (Human) protein is DnaJ homolog subfamily B member 6 (DNAJB6).